A 96-amino-acid chain; its full sequence is Co-chaperonin GroES (96 aa).

Belongs to the GroES chaperonin family. Heptamer of 7 subunits arranged in a ring. Interacts with the chaperonin GroEL.

Its subcellular location is the cytoplasm. Together with the chaperonin GroEL, plays an essential role in assisting protein folding. The GroEL-GroES system forms a nano-cage that allows encapsulation of the non-native substrate proteins and provides a physical environment optimized to promote and accelerate protein folding. GroES binds to the apical surface of the GroEL ring, thereby capping the opening of the GroEL channel. The chain is Co-chaperonin GroES from Pelagibacter ubique (strain HTCC1062).